Here is a 131-residue protein sequence, read N- to C-terminus: uncharacterized protein (131 aa).

A disordered region spans residues 1–67 (MCSARKLLRG…HSGEPIGDDY (67 aa)). Position 14 is a phosphoserine (S14). Residues 99 to 119 (VVVLFFWLMLWFLGLQALGLV) form a helical membrane-spanning segment.

The protein belongs to the FAM241 family.

It is found in the membrane. This is an uncharacterized protein from Mus musculus (Mouse).